Reading from the N-terminus, the 63-residue chain is Large ribosomal subunit protein bL32 (63 aa).

The tract at residues 1–20 (MANPKAKMSKSRRDKRRAQF) is disordered. A compositionally biased stretch (basic residues) spans 7-18 (KMSKSRRDKRRA).

The protein belongs to the bacterial ribosomal protein bL32 family.

The protein is Large ribosomal subunit protein bL32 of Chlorobaculum tepidum (strain ATCC 49652 / DSM 12025 / NBRC 103806 / TLS) (Chlorobium tepidum).